The sequence spans 141 residues: Large ribosomal subunit protein uL11 (141 aa).

It belongs to the universal ribosomal protein uL11 family. As to quaternary structure, part of the ribosomal stalk of the 50S ribosomal subunit. Interacts with L10 and the large rRNA to form the base of the stalk. L10 forms an elongated spine to which L12 dimers bind in a sequential fashion forming a multimeric L10(L12)X complex. One or more lysine residues are methylated.

Forms part of the ribosomal stalk which helps the ribosome interact with GTP-bound translation factors. The polypeptide is Large ribosomal subunit protein uL11 (Prosthecochloris aestuarii (strain DSM 271 / SK 413)).